A 317-amino-acid chain; its full sequence is DNA-directed RNA polymerase subunit alpha (317 aa).

Residues 1–230 are alpha N-terminal domain (alpha-NTD); that stretch reads MIEIEMEKPK…EHLNLFITLT (230 aa). The alpha C-terminal domain (alpha-CTD) stretch occupies residues 247-317; it reads KEKVLEMTIE…LGLGLRPSDE (71 aa).

It belongs to the RNA polymerase alpha chain family. As to quaternary structure, homodimer. The RNAP catalytic core consists of 2 alpha, 1 beta, 1 beta' and 1 omega subunit. When a sigma factor is associated with the core the holoenzyme is formed, which can initiate transcription.

The enzyme catalyses RNA(n) + a ribonucleoside 5'-triphosphate = RNA(n+1) + diphosphate. Functionally, DNA-dependent RNA polymerase catalyzes the transcription of DNA into RNA using the four ribonucleoside triphosphates as substrates. In Alkaliphilus oremlandii (strain OhILAs) (Clostridium oremlandii (strain OhILAs)), this protein is DNA-directed RNA polymerase subunit alpha.